The chain runs to 144 residues: Large-conductance mechanosensitive channel (144 aa).

Helical transmembrane passes span 14–34 (VLDM…VTSF) and 81–101 (GTFL…FLII).

This sequence belongs to the MscL family. As to quaternary structure, homopentamer.

The protein localises to the cell inner membrane. Channel that opens in response to stretch forces in the membrane lipid bilayer. May participate in the regulation of osmotic pressure changes within the cell. The polypeptide is Large-conductance mechanosensitive channel (Bdellovibrio bacteriovorus (strain ATCC 15356 / DSM 50701 / NCIMB 9529 / HD100)).